Consider the following 364-residue polypeptide: Probable dual-specificity RNA methyltransferase RlmN (364 aa).

E106 (proton acceptor) is an active-site residue. Residues 112 to 350 (YPRRNTVCIS…SCTVRDTRGR (239 aa)) enclose the Radical SAM core domain. C119 and C356 are oxidised to a cystine. [4Fe-4S] cluster contacts are provided by C126, C130, and C133. Residues 177–178 (GE), S211, 234–236 (SLH), and N313 contribute to the S-adenosyl-L-methionine site. The active-site S-methylcysteine intermediate is the C356.

Belongs to the radical SAM superfamily. RlmN family. [4Fe-4S] cluster serves as cofactor.

Its subcellular location is the cytoplasm. The catalysed reaction is adenosine(2503) in 23S rRNA + 2 reduced [2Fe-2S]-[ferredoxin] + 2 S-adenosyl-L-methionine = 2-methyladenosine(2503) in 23S rRNA + 5'-deoxyadenosine + L-methionine + 2 oxidized [2Fe-2S]-[ferredoxin] + S-adenosyl-L-homocysteine. The enzyme catalyses adenosine(37) in tRNA + 2 reduced [2Fe-2S]-[ferredoxin] + 2 S-adenosyl-L-methionine = 2-methyladenosine(37) in tRNA + 5'-deoxyadenosine + L-methionine + 2 oxidized [2Fe-2S]-[ferredoxin] + S-adenosyl-L-homocysteine. Functionally, specifically methylates position 2 of adenine 2503 in 23S rRNA and position 2 of adenine 37 in tRNAs. The sequence is that of Probable dual-specificity RNA methyltransferase RlmN from Mycobacterium bovis (strain ATCC BAA-935 / AF2122/97).